A 367-amino-acid polypeptide reads, in one-letter code: Homoserine O-acetyltransferase (367 aa).

The region spanning asparagine 41–glutamate 339 is the AB hydrolase-1 domain. Serine 136 functions as the Nucleophile in the catalytic mechanism. A substrate-binding site is contributed by arginine 205. Catalysis depends on residues aspartate 303 and histidine 333. Residue aspartate 334 coordinates substrate.

The protein belongs to the AB hydrolase superfamily. MetX family. Homodimer.

Its subcellular location is the cytoplasm. The catalysed reaction is L-homoserine + acetyl-CoA = O-acetyl-L-homoserine + CoA. The protein operates within amino-acid biosynthesis; L-methionine biosynthesis via de novo pathway; O-acetyl-L-homoserine from L-homoserine: step 1/1. Its function is as follows. Transfers an acetyl group from acetyl-CoA to L-homoserine, forming acetyl-L-homoserine. This Corynebacterium diphtheriae (strain ATCC 700971 / NCTC 13129 / Biotype gravis) protein is Homoserine O-acetyltransferase.